Here is a 192-residue protein sequence, read N- to C-terminus: Lumican (192 aa).

9 LRR repeats span residues 1–23 (LQWL…VFSK), 26–46 (QLKK…PLPK), 47–68 (SLED…DGLL), 69–90 (NLTF…AAFK), 94–114 (SLEY…GLPA), 115–136 (SLLT…YFKR), 139–162 (GLQY…SFNI), 164–185 (SLVE…NENL), and 186–192 (ENYYLEV).

This sequence belongs to the small leucine-rich proteoglycan (SLRP) family. SLRP class II subfamily. Binds to laminin. In terms of processing, sulfated on tyrosine residue(s). Contains keratan sulfate.

It is found in the secreted. Its subcellular location is the extracellular space. It localises to the extracellular matrix. This chain is Lumican (LUM), found in Oryctolagus cuniculus (Rabbit).